A 263-amino-acid chain; its full sequence is 3-methyl-2-oxobutanoate hydroxymethyltransferase 2 (263 aa).

Mg(2+)-binding residues include Asp-45 and Asp-84. 3-methyl-2-oxobutanoate-binding positions include 45–46 (DS), Asp-84, and Lys-112. Position 114 (Glu-114) interacts with Mg(2+). Residue Glu-181 is the Proton acceptor of the active site.

This sequence belongs to the PanB family. In terms of assembly, homodecamer; pentamer of dimers. Mg(2+) serves as cofactor.

The protein localises to the cytoplasm. The enzyme catalyses 3-methyl-2-oxobutanoate + (6R)-5,10-methylene-5,6,7,8-tetrahydrofolate + H2O = 2-dehydropantoate + (6S)-5,6,7,8-tetrahydrofolate. Its pathway is cofactor biosynthesis; (R)-pantothenate biosynthesis; (R)-pantoate from 3-methyl-2-oxobutanoate: step 1/2. In terms of biological role, catalyzes the reversible reaction in which hydroxymethyl group from 5,10-methylenetetrahydrofolate is transferred onto alpha-ketoisovalerate to form ketopantoate. This chain is 3-methyl-2-oxobutanoate hydroxymethyltransferase 2, found in Aliivibrio fischeri (strain ATCC 700601 / ES114) (Vibrio fischeri).